The chain runs to 90 residues: Probable Fe(2+)-trafficking protein (90 aa).

Belongs to the Fe(2+)-trafficking protein family.

Its function is as follows. Could be a mediator in iron transactions between iron acquisition and iron-requiring processes, such as synthesis and/or repair of Fe-S clusters in biosynthetic enzymes. This Herminiimonas arsenicoxydans protein is Probable Fe(2+)-trafficking protein.